Consider the following 116-residue polypeptide: Large ribosomal subunit protein uL18 (116 aa).

It belongs to the universal ribosomal protein uL18 family. In terms of assembly, part of the 50S ribosomal subunit; part of the 5S rRNA/L5/L18/L25 subcomplex. Contacts the 5S and 23S rRNAs.

Functionally, this is one of the proteins that bind and probably mediate the attachment of the 5S RNA into the large ribosomal subunit, where it forms part of the central protuberance. The sequence is that of Large ribosomal subunit protein uL18 from Shewanella woodyi (strain ATCC 51908 / MS32).